Reading from the N-terminus, the 216-residue chain is Probable transaldolase (216 aa).

The active-site Schiff-base intermediate with substrate is Lys83.

Belongs to the transaldolase family. Type 3B subfamily.

It is found in the cytoplasm. The enzyme catalyses D-sedoheptulose 7-phosphate + D-glyceraldehyde 3-phosphate = D-erythrose 4-phosphate + beta-D-fructose 6-phosphate. It functions in the pathway carbohydrate degradation; pentose phosphate pathway; D-glyceraldehyde 3-phosphate and beta-D-fructose 6-phosphate from D-ribose 5-phosphate and D-xylulose 5-phosphate (non-oxidative stage): step 2/3. Transaldolase is important for the balance of metabolites in the pentose-phosphate pathway. In Shouchella clausii (strain KSM-K16) (Alkalihalobacillus clausii), this protein is Probable transaldolase.